Reading from the N-terminus, the 99-residue chain is Aspartyl/glutamyl-tRNA(Asn/Gln) amidotransferase subunit C (99 aa).

Belongs to the GatC family. Heterotrimer of A, B and C subunits.

The enzyme catalyses L-glutamyl-tRNA(Gln) + L-glutamine + ATP + H2O = L-glutaminyl-tRNA(Gln) + L-glutamate + ADP + phosphate + H(+). It catalyses the reaction L-aspartyl-tRNA(Asn) + L-glutamine + ATP + H2O = L-asparaginyl-tRNA(Asn) + L-glutamate + ADP + phosphate + 2 H(+). Its function is as follows. Allows the formation of correctly charged Asn-tRNA(Asn) or Gln-tRNA(Gln) through the transamidation of misacylated Asp-tRNA(Asn) or Glu-tRNA(Gln) in organisms which lack either or both of asparaginyl-tRNA or glutaminyl-tRNA synthetases. The reaction takes place in the presence of glutamine and ATP through an activated phospho-Asp-tRNA(Asn) or phospho-Glu-tRNA(Gln). This chain is Aspartyl/glutamyl-tRNA(Asn/Gln) amidotransferase subunit C, found in Ralstonia pickettii (strain 12J).